We begin with the raw amino-acid sequence, 108 residues long: UPF0060 membrane protein Rsph17029_0436 (108 aa).

A run of 4 helical transmembrane segments spans residues 5 to 25, 32 to 52, 62 to 82, and 86 to 106; these read LAAY…VWAW, ALWL…LALT, AVYG…VEGV, and RWDM…LWAP.

Belongs to the UPF0060 family.

Its subcellular location is the cell inner membrane. This is UPF0060 membrane protein Rsph17029_0436 from Cereibacter sphaeroides (strain ATCC 17029 / ATH 2.4.9) (Rhodobacter sphaeroides).